The primary structure comprises 188 residues: Zinc finger protein 428 (188 aa).

The disordered stretch occupies residues 1–162; that stretch reads MTETREPAET…EEEEEEGTYH (162 aa). Acidic residues predominate over residues 40–61; that stretch reads PDSEEEEDEEEEEEETTDDPEY. Positions 84-94 are enriched in low complexity; sequence RAAQPPAQPCQ. Thr108 bears the Phosphothreonine mark. Low complexity predominate over residues 116–129; the sequence is PATAPQEAPAPEGR. Residues 138 to 149 are compositionally biased toward basic and acidic residues; sequence PPRAGEGRPAGR. Residues 161–183 form a C2H2-type zinc finger; sequence YHCTECEDSFDNLGELHGHFMLH.

This Homo sapiens (Human) protein is Zinc finger protein 428 (ZNF428).